The following is a 670-amino-acid chain: Protein-glutamine gamma-glutamyltransferase 4 (670 aa).

N-linked (GlcNAc...) asparagine glycans are attached at residues asparagine 151 and asparagine 219. Residue cysteine 255 is part of the active site. Asparagine 288 is a glycosylation site (N-linked (GlcNAc...) asparagine). Active-site residues include histidine 314 and aspartate 337. Ca(2+) contacts are provided by asparagine 377, aspartate 379, glutamate 429, and glutamate 434. 2 N-linked (GlcNAc...) asparagine glycosylation sites follow: asparagine 456 and asparagine 491.

This sequence belongs to the transglutaminase superfamily. Transglutaminase family. Homodimer. Requires Ca(2+) as cofactor. As to expression, expressed in the coagulating gland and in the dorsal part of the prostate. Not expressed in the brain, heart, kidney, liver, lung, muscle, pancreas, spleen, stomach, testis and thymus.

The protein resides in the secreted. The enzyme catalyses L-glutaminyl-[protein] + L-lysyl-[protein] = [protein]-L-lysyl-N(6)-5-L-glutamyl-[protein] + NH4(+). Its function is as follows. Associated with the mammalian reproductive process. Plays an important role in the formation of the seminal coagulum through the cross-linking of specific proteins present in the seminal plasma. Transglutaminase is also required to stabilize the copulatory plug. In Mus musculus (Mouse), this protein is Protein-glutamine gamma-glutamyltransferase 4.